We begin with the raw amino-acid sequence, 837 residues long: Enterin neuropeptides (837 aa).

The N-terminal stretch at 1-25 (MAKHDVTVMTLLLVVCALHVFDAQG) is a signal peptide. Residues 26–47 (TDVKLNDGFLRSGIMNIPFQRR) constitute a propeptide that is removed on maturation. V57 is modified (valine amide). Residues 61 to 134 (SGFQSPVSPS…ENKRFSKENE (74 aa)) constitute a propeptide that is removed on maturation. Valine amide is present on V146. The propeptide occupies 150–178 (MDLSALEKELIAKLKAADLLSPLETEAPG). L190 is modified (leucine amide). Residues 194–201 (MPVDVFPR) constitute a propeptide that is removed on maturation. A Valine amide modification is found at V211. Residues 215-234 (SGNGENYFDDLDTFGDISQR) constitute a propeptide that is removed on maturation. Residue V244 is modified to Valine amide. Residues 248 to 266 (GNTDFSRNPLARLSQVQNR) constitute a propeptide that is removed on maturation. V276 bears the Valine amide mark. A propeptide spanning residues 280–285 (SVHNIV) is cleaved from the precursor. At V297 the chain carries Valine amide. Residues 301 to 325 (DFEDASEGLDEEEGDIDGYSDDLDV) constitute a propeptide that is removed on maturation. Valine amide occurs at positions 336, 348, 360, 372, 384, 396, 408, 420, 432, 444, 456, 468, 480, 492, 504, 516, 528, and 540. A propeptide spanning residues 544–595 (ELGEDEINFLKEVDAADISRQLAEEDEKEAMVSVDDKETLSNEEDASEDDFE) is cleaved from the precursor. Residues 567–594 (EEDEKEAMVSVDDKETLSNEEDASEDDF) are disordered. Residues 584–593 (SNEEDASEDD) show a composition bias toward acidic residues. E598 is modified (pyrrolidone carboxylic acid (Glu); in form ENl'). V606 is subject to Valine amide. Positions 610–627 (DEEGDMGVEMEEEMESEK) are excised as a propeptide. Residue L637 is modified to Leucine amide. At Q641 the chain carries Pyrrolidone carboxylic acid. V649 is subject to Valine amide. The residue at position 653 (Q653) is a Pyrrolidone carboxylic acid. V661 and V673 each carry valine amide. Q677 bears the Pyrrolidone carboxylic acid mark. Valine amide occurs at positions 685 and 697. Q701 carries the pyrrolidone carboxylic acid modification. The residue at position 709 (V709) is a Valine amide. Q713 is modified (pyrrolidone carboxylic acid). Valine amide is present on V721. A Pyrrolidone carboxylic acid modification is found at Q725. V733 carries the post-translational modification Valine amide. Positions 734-837 (GKRSGAEDID…DSHIMATSST (104 aa)) are excised as a propeptide. The tract at residues 772–837 (GQPAAANEEE…DSHIMATSST (66 aa)) is disordered. Residues 778 to 791 (NEEELQQEAAEESE) show a composition bias toward acidic residues.

As to expression, high expression in gut and CNS.

It is found in the secreted. Its function is as follows. Reduce interneurons B4/5 activity. May play a regulatory role in nonfeeding behaviors. This is Enterin neuropeptides (ENPP) from Aplysia californica (California sea hare).